The primary structure comprises 803 residues: Bromodomain-containing protein 2 (803 aa).

M1 carries the post-translational modification N-acetylmethionine. The tract at residues 1–28 is disordered; it reads MLQNVTPHSKLPGEGNAGLLGLGPEAAA. Position 6 is a phosphothreonine (T6). A Phosphoserine modification is found at S37. A disordered region spans residues 53–73; it reads ALQLTPANPPPPEVSNPKKPG. The region spanning 74 to 180 is the Bromo 1 domain; sequence RVTNQLQYLH…KIFLQKVASM (107 aa). Residues D112, Y155, N156, K157, D160, and D161 each contribute to the a protein site. Disordered stretches follow at residues 268–349, 456–653, and 739–803; these read PPAQ…LSEQ, EPLE…RQLS, and EKRL…SDSG. Low complexity predominate over residues 285 to 298; that stretch reads TTTPTPTAILAPGS. Phosphoserine occurs at positions 298, 301, and 305. Over residues 316–332 the composition is skewed to basic and acidic residues; sequence MRRESGRPIKPPRKDLP. The Bromo 2 domain maps to 344–453; it reads GKLSEQLKHC…DVFEFRYAKM (110 aa). Acidic residues predominate over residues 481 to 515; it reads SSEESSSESSSEEDEEEDEEEEEEEEESESSDSEE. Basic residues predominate over residues 545–567; sequence KPKRKREKKEKKKKRKAEKHRGR. Positions 556-560 match the Nuclear localization signal motif; that stretch reads KKKRK. The region spanning 634 to 716 is the NET domain; the sequence is DSEEEEESRP…SCLRKKPRKP (83 aa). Phosphoserine is present on S635. Basic and acidic residues predominate over residues 641 to 652; it reads SRPMSYDEKRQL. Residues 777–797 are compositionally biased toward low complexity; sequence SASSSSSDSSSSSSSSSSSDT.

It belongs to the BET family. Homodimer. Interacts with E2F1. Interacts with (acetylated) STAT3; promoting STAT3 recruitment to chromatin. Interacts with CTCF; promoting BRD2 recruitment to chromatin.

It localises to the nucleus. The protein localises to the chromosome. Its function is as follows. Chromatin reader protein that specifically recognizes and binds histone H4 acetylated at 'Lys-5' and 'Lys-12' (H4K5ac and H4K12ac, respectively), thereby controlling gene expression and remodeling chromatin structures. Recruits transcription factors and coactivators to target gene sites, and activates RNA polymerase II machinery for transcriptional elongation. Plays a key role in genome compartmentalization via its association with CTCF and cohesin: recruited to chromatin by CTCF and promotes formation of topologically associating domains (TADs) via its ability to bind acetylated histones, contributing to CTCF boundary formation and enhancer insulation. Also recognizes and binds acetylated non-histone proteins, such as STAT3. Involved in inflammatory response by regulating differentiation of naive CD4(+) T-cells into T-helper Th17: recognizes and binds STAT3 acetylated at 'Lys-87', promoting STAT3 recruitment to chromatin. In addition to acetylated lysines, also recognizes and binds lysine residues on histones that are both methylated and acetylated on the same side chain to form N6-acetyl-N6-methyllysine (Kacme), an epigenetic mark of active chromatin associated with increased transcriptional initiation. Specifically binds histone H4 acetyl-methylated at 'Lys-5' and 'Lys-12' (H4K5acme and H4K12acme, respectively). The sequence is that of Bromodomain-containing protein 2 (BRD2) from Canis lupus familiaris (Dog).